Here is a 486-residue protein sequence, read N- to C-terminus: Malonate-semialdehyde dehydrogenase 1 (486 aa).

Residues Phe154, Lys178, Glu181, Arg182, and Ser231 each contribute to the NAD(+) site. Cys286 (nucleophile) is an active-site residue. Glu386 provides a ligand contact to NAD(+).

It belongs to the aldehyde dehydrogenase family. IolA subfamily. Homotetramer.

The catalysed reaction is 3-oxopropanoate + NAD(+) + CoA + H2O = hydrogencarbonate + acetyl-CoA + NADH + H(+). It catalyses the reaction 2-methyl-3-oxopropanoate + NAD(+) + CoA + H2O = propanoyl-CoA + hydrogencarbonate + NADH + H(+). Its pathway is polyol metabolism; myo-inositol degradation into acetyl-CoA; acetyl-CoA from myo-inositol: step 7/7. Catalyzes the oxidation of malonate semialdehyde (MSA) and methylmalonate semialdehyde (MMSA) into acetyl-CoA and propanoyl-CoA, respectively. Is involved in a myo-inositol catabolic pathway. Bicarbonate, and not CO2, is the end-product of the enzymatic reaction. The chain is Malonate-semialdehyde dehydrogenase 1 from Bacillus thuringiensis (strain Al Hakam).